The following is a 180-amino-acid chain: UPF0340 protein LACR_0494 (180 aa).

It belongs to the UPF0340 family.

The chain is UPF0340 protein LACR_0494 from Lactococcus lactis subsp. cremoris (strain SK11).